The primary structure comprises 842 residues: Gamma-aminobutyric acid type B receptor subunit 2 (842 aa).

Positions 1–17 (MSRWLSLLLFAVQAVGG) are cleaved as a signal peptide. The Extracellular portion of the chain corresponds to 18-438 (YEAGEELSCK…TERRREHISS (421 aa)). N-linked (GlcNAc...) asparagine glycans are attached at residues Asn274, Asn279, Asn327, and Asn366. Residues 439–459 (ILFLAMSLLALIGIFLALIFL) traverse the membrane as a helical segment. Topologically, residues 460 to 477 (LINFRYRNHRFIKMSSPN) are cytoplasmic. The chain crosses the membrane as a helical span at residues 478–498 (LNNIIIAGSICTFASVIMLGL). The Extracellular portion of the chain corresponds to 499-506 (DTRIVSPD). Residues 507-527 (VFVWLCYTKTWTLCIGFTLSF) form a helical membrane-spanning segment. Topologically, residues 528–556 (GAMFSKTWRVHSIFTNIRMDRKAIKDSKL) are cytoplasmic. Residues 557-577 (FIILGILLFIDICVLVTWAFV) form a helical membrane-spanning segment. The Extracellular segment spans residues 578–610 (SPFSYTVTELPHIPEDNIVIIPEVEKCNSSHSG). Asn605 carries an N-linked (GlcNAc...) asparagine glycan. The helical transmembrane segment at 611–631 (VFQAVLYAVKGVLMILGCFLA) threads the bilayer. At 632–647 (WETRHVNVPALNDSKY) the chain is on the cytoplasmic side. Residues 648 to 668 (IGTSVYCCVVMSVLGLSTSVI) traverse the membrane as a helical segment. Topologically, residues 669-676 (LQERVNEM) are extracellular. Residues 677–697 (FSLASFFVIFSTTLTLCLVFV) traverse the membrane as a helical segment. Topologically, residues 698–842 (PKVIELARNP…VDPDEPSTKL (145 aa)) are cytoplasmic. Residues 725–740 (AKTSQPMSPQPRSDSS) are compositionally biased toward polar residues. 2 disordered regions span residues 725 to 744 (AKTS…GDLI) and 791 to 842 (SPSS…STKL).

Belongs to the G-protein coupled receptor 3 family. As to quaternary structure, may form a heterodimer with gbb-1. In terms of tissue distribution, expressed in cholinergic motor neurons.

The protein localises to the cell membrane. Functionally, component of a heterodimeric G-protein coupled receptor for GABA, formed by gbb-1 and gbb-2. Within the heterodimeric GABA receptor, only gbb-1 seems to bind agonists, while gbb-2 mediates coupling to G proteins. Ligand binding causes a conformation change that triggers signaling via guanine nucleotide-binding proteins (G proteins) and modulates the activity of down-stream effectors, such as adenylate cyclase. Signaling inhibits adenylate cyclase, stimulates phospholipase A2, activates potassium channels, inactivates voltage-dependent calcium-channels and modulates inositol phospholipid hydrolysis. Plays a critical role in the fine-tuning of inhibitory synaptic transmission. Pre-synaptic GABA receptor inhibits neurotransmitter release by down-regulating high-voltage activated calcium channels, whereas postsynaptic GABA receptor decreases neuronal excitability by activating a prominent inwardly rectifying potassium (Kir) conductance that underlies the late inhibitory postsynaptic potentials. Along with gbb-1, may couple to the G(o)-alpha G-protein goa-1 to negatively regulate cholinergic receptor activity in the presence of high levels of acetylcholine in ventral cord motor neurons. As acetylcholine depolarizes body wall muscles, modulation of acetylcholine levels most likely results in the control of locomotory behavior. Regulates locomotory behavior in response to GABA release by GABAergic motor neurons. The sequence is that of Gamma-aminobutyric acid type B receptor subunit 2 from Caenorhabditis elegans.